The chain runs to 461 residues: Cysteine--tRNA ligase (461 aa).

Zn(2+) is bound at residue C28. A 'HIGH' region motif is present at residues 30 to 40; it reads VTIYDLCHIGH. The Zn(2+) site is built by C209, H234, and E238. Positions 266–270 match the 'KMSKS' region motif; sequence KMSKS. K269 is a binding site for ATP.

It belongs to the class-I aminoacyl-tRNA synthetase family. Monomer. The cofactor is Zn(2+).

Its subcellular location is the cytoplasm. The enzyme catalyses tRNA(Cys) + L-cysteine + ATP = L-cysteinyl-tRNA(Cys) + AMP + diphosphate. The chain is Cysteine--tRNA ligase from Vibrio atlanticus (strain LGP32) (Vibrio splendidus (strain Mel32)).